A 226-amino-acid chain; its full sequence is 7-cyano-7-deazaguanine synthase (226 aa).

Residue 10-20 (LSGGLDSATAA) coordinates ATP. Zn(2+) is bound by residues Cys191, Cys199, Cys202, and Cys205.

This sequence belongs to the QueC family. The cofactor is Zn(2+).

It carries out the reaction 7-carboxy-7-deazaguanine + NH4(+) + ATP = 7-cyano-7-deazaguanine + ADP + phosphate + H2O + H(+). Its pathway is purine metabolism; 7-cyano-7-deazaguanine biosynthesis. Its function is as follows. Catalyzes the ATP-dependent conversion of 7-carboxy-7-deazaguanine (CDG) to 7-cyano-7-deazaguanine (preQ(0)). The protein is 7-cyano-7-deazaguanine synthase of Parasynechococcus marenigrum (strain WH8102).